The primary structure comprises 251 residues: 3-dehydroquinate dehydratase (251 aa).

3-dehydroquinate contacts are provided by residues 47 to 49 (EWR) and Arg-83. His-144 serves as the catalytic Proton donor/acceptor. Catalysis depends on Lys-171, which acts as the Schiff-base intermediate with substrate. 3-dehydroquinate is bound by residues Arg-214, Ser-233, and Gln-237.

The protein belongs to the type-I 3-dehydroquinase family. In terms of assembly, homodimer.

It catalyses the reaction 3-dehydroquinate = 3-dehydroshikimate + H2O. The protein operates within metabolic intermediate biosynthesis; chorismate biosynthesis; chorismate from D-erythrose 4-phosphate and phosphoenolpyruvate: step 3/7. Its function is as follows. Involved in the third step of the chorismate pathway, which leads to the biosynthesis of aromatic amino acids. Catalyzes the cis-dehydration of 3-dehydroquinate (DHQ) and introduces the first double bond of the aromatic ring to yield 3-dehydroshikimate. The polypeptide is 3-dehydroquinate dehydratase (Klebsiella pneumoniae (strain 342)).